A 129-amino-acid chain; its full sequence is Fluoride-specific ion channel FluC 2 (129 aa).

A helical membrane pass occupies residues 19–39 (GLGLVVPAAAVGGFPLGTLFI). Positions 74 and 77 each coordinate Na(+). Residues 95 to 115 (FGMAAVYIAASLFGGLLASWA) traverse the membrane as a helical segment.

This sequence belongs to the fluoride channel Fluc/FEX (TC 1.A.43) family.

It localises to the cell membrane. The catalysed reaction is fluoride(in) = fluoride(out). With respect to regulation, na(+) is not transported, but it plays an essential structural role and its presence is essential for fluoride channel function. Functionally, fluoride-specific ion channel. Important for reducing fluoride concentration in the cell, thus reducing its toxicity. In Geobacillus kaustophilus (strain HTA426), this protein is Fluoride-specific ion channel FluC 2.